A 379-amino-acid polypeptide reads, in one-letter code: Beta-1,3-N-acetylglucosaminyltransferase lunatic fringe (379 aa).

Over 1-8 (MLKRCGRR) the chain is Cytoplasmic. The helical; Signal-anchor for type II membrane protein transmembrane segment at 9 to 29 (LLLALAGALLACLLVLTADPP) threads the bilayer. The Lumenal segment spans residues 30-379 (PPPLPAERGR…TPWCPRTAIF (350 aa)). The disordered stretch occupies residues 86 to 107 (RDAGPPPGAAPRPADGHPRPLA). Residue arginine 129 participates in substrate binding. Asparagine 167 carries N-linked (GlcNAc...) asparagine glycosylation. Disulfide bonds link cysteine 168–cysteine 179 and cysteine 197–cysteine 260. Position 201 (aspartate 201) interacts with substrate. Aspartate 202 is a Mn(2+) binding site. Residue aspartate 290 is part of the active site. Position 314 (histidine 314) interacts with Mn(2+). Cysteine 364 and cysteine 373 are oxidised to a cystine.

Belongs to the glycosyltransferase 31 family. Requires Mn(2+) as cofactor. The cofactor is Co(2+). Post-translationally, a soluble form may be derived from the membrane form by proteolytic processing.

Its subcellular location is the golgi apparatus. It localises to the golgi apparatus membrane. It carries out the reaction 3-O-(alpha-L-fucosyl)-L-threonyl-[EGF-like domain protein] + UDP-N-acetyl-alpha-D-glucosamine = 3-O-(N-acetyl-beta-D-glucosaminyl-(1-&gt;3)-alpha-L-fucosyl)-L-threonyl-[EGF-like domain protein] + UDP + H(+). It catalyses the reaction 3-O-(alpha-L-fucosyl)-L-seryl-[EGF-like domain protein] + UDP-N-acetyl-alpha-D-glucosamine = 3-O-(N-acetyl-beta-D-glucosaminyl-(1-&gt;3)-alpha-L-fucosyl)-L-seryl-[EGF-like domain protein] + UDP + H(+). Its function is as follows. Glycosyltransferase that initiates the elongation of O-linked fucose residues attached to EGF-like repeats in the extracellular domain of Notch molecules. Modulates NOTCH1 activity by modifying O-fucose residues at specific EGF-like domains resulting in inhibition of NOTCH1 activation by JAG1 and enhancement of NOTCH1 activation by DLL1 via an increase in its binding to DLL1. Decreases the binding of JAG1 to NOTCH2 but not that of DLL1. Essential mediator of somite segmentation and patterning. The protein is Beta-1,3-N-acetylglucosaminyltransferase lunatic fringe of Homo sapiens (Human).